The chain runs to 279 residues: Orotidine 5'-phosphate decarboxylase (279 aa).

Substrate contacts are provided by residues D8, K30, 58 to 67 (DLKIHDIPNT), T117, R177, Q186, G206, and R207. The active-site Proton donor is the K60.

It belongs to the OMP decarboxylase family. Type 1 subfamily. As to quaternary structure, homodimer.

It carries out the reaction orotidine 5'-phosphate + H(+) = UMP + CO2. The protein operates within pyrimidine metabolism; UMP biosynthesis via de novo pathway; UMP from orotate: step 2/2. In terms of biological role, catalyzes the decarboxylation of orotidine 5'-monophosphate (OMP) to uridine 5'-monophosphate (UMP). This Campylobacter jejuni (strain RM1221) protein is Orotidine 5'-phosphate decarboxylase.